The following is a 101-amino-acid chain: Large ribosomal subunit protein eL21 (101 aa).

The segment covering 1-18 (MVKHSRGYRTRSRSLLRK) has biased composition (basic residues). The disordered stretch occupies residues 1–23 (MVKHSRGYRTRSRSLLRKSPRER).

It belongs to the eukaryotic ribosomal protein eL21 family.

This chain is Large ribosomal subunit protein eL21, found in Saccharolobus islandicus (strain Y.G.57.14 / Yellowstone #1) (Sulfolobus islandicus).